The chain runs to 419 residues: Enolase (419 aa).

Glutamine 161 contributes to the (2R)-2-phosphoglycerate binding site. The active-site Proton donor is glutamate 205. Aspartate 240, glutamate 283, and aspartate 309 together coordinate Mg(2+). Lysine 334, arginine 363, serine 364, and lysine 385 together coordinate (2R)-2-phosphoglycerate. Lysine 334 serves as the catalytic Proton acceptor.

The protein belongs to the enolase family. It depends on Mg(2+) as a cofactor.

It localises to the cytoplasm. It is found in the secreted. Its subcellular location is the cell surface. The catalysed reaction is (2R)-2-phosphoglycerate = phosphoenolpyruvate + H2O. The protein operates within carbohydrate degradation; glycolysis; pyruvate from D-glyceraldehyde 3-phosphate: step 4/5. Functionally, catalyzes the reversible conversion of 2-phosphoglycerate (2-PG) into phosphoenolpyruvate (PEP). It is essential for the degradation of carbohydrates via glycolysis. The sequence is that of Enolase from Saccharolobus islandicus (strain Y.G.57.14 / Yellowstone #1) (Sulfolobus islandicus).